The following is a 310-amino-acid chain: Elongation factor Ts (310 aa).

An involved in Mg(2+) ion dislocation from EF-Tu region spans residues 80-83; sequence TDFV.

The protein belongs to the EF-Ts family.

It localises to the cytoplasm. Functionally, associates with the EF-Tu.GDP complex and induces the exchange of GDP to GTP. It remains bound to the aminoacyl-tRNA.EF-Tu.GTP complex up to the GTP hydrolysis stage on the ribosome. The sequence is that of Elongation factor Ts from Methylocella silvestris (strain DSM 15510 / CIP 108128 / LMG 27833 / NCIMB 13906 / BL2).